We begin with the raw amino-acid sequence, 356 residues long: A-type ATP synthase subunit C (356 aa).

It belongs to the V-ATPase V0D/AC39 subunit family. Has multiple subunits with at least A(3), B(3), C, D, E, F, H, I and proteolipid K(x).

The protein localises to the cell membrane. Functionally, component of the A-type ATP synthase that produces ATP from ADP in the presence of a proton gradient across the membrane. The protein is A-type ATP synthase subunit C of Thermoplasma volcanium (strain ATCC 51530 / DSM 4299 / JCM 9571 / NBRC 15438 / GSS1).